We begin with the raw amino-acid sequence, 374 residues long: Pulmonary surfactant-associated protein D (374 aa).

The signal sequence occupies residues 1-19; sequence MLPFLSMLVLLVQPLGNLG. S-nitrosocysteine is present on residues C34 and C39. The segment at 38–222 is disordered; that stretch reads MCSPTENGLP…GIKGESGLPD (185 aa). The Collagen-like domain maps to 45 to 221; that stretch reads GLPGRDGRDG…RGIKGESGLP (177 aa). The segment covering 49–64 has biased composition (basic and acidic residues); it reads RDGRDGREGPRGEKGD. Residues 70-79 are compositionally biased toward low complexity; sequence PMGLSGLQGP. N-linked (GlcNAc...) asparagine glycosylation occurs at N89. Low complexity-rich tracts occupy residues 137 to 149 and 169 to 200; these read KGEA…VGAP and APGV…RGPP. Basic and acidic residues predominate over residues 203 to 215; the sequence is KGDRGVPGDRGIK. Residues 222 to 253 adopt a coiled-coil conformation; the sequence is DSAALRQQMEALKGKLQRLEVAFSHYQKAALF. Residues 259–374 enclose the C-type lectin domain; it reads VGDKIFRTAD…GEQRLVICEF (116 aa). 2 disulfides stabilise this stretch: C280–C372 and C350–C364.

This sequence belongs to the SFTPD family. Oligomeric complex of 4 set of homotrimers. Post-translationally, S-nitrosylation at Cys-34 and Cys-39 alters the quaternary structure which results in a pro-inflammatory chemoattractive signaling activity with macrophages.

It localises to the secreted. Its subcellular location is the extracellular space. It is found in the extracellular matrix. The protein localises to the surface film. Functionally, contributes to the lung's defense against inhaled microorganisms, organic antigens and toxins. Interacts with compounds such as bacterial lipopolysaccharides, oligosaccharides and fatty acids and modulates leukocyte action in immune response. May participate in the extracellular reorganization or turnover of pulmonary surfactant. Binds strongly maltose residues and to a lesser extent other alpha-glucosyl moieties. This chain is Pulmonary surfactant-associated protein D (Sftpd), found in Mus musculus (Mouse).